Here is an 855-residue protein sequence, read N- to C-terminus: DNA mismatch repair protein MutS (855 aa).

Residue 617 to 624 participates in ATP binding; the sequence is GPNMGGKS.

It belongs to the DNA mismatch repair MutS family.

This protein is involved in the repair of mismatches in DNA. It is possible that it carries out the mismatch recognition step. This protein has a weak ATPase activity. The polypeptide is DNA mismatch repair protein MutS (Baumannia cicadellinicola subsp. Homalodisca coagulata).